Reading from the N-terminus, the 186-residue chain is Transposon Tn501 resolvase (186 aa).

The region spanning 4–137 (HRIGYVRVSS…EGITLAKQRG (134 aa)) is the Resolvase/invertase-type recombinase catalytic domain. Catalysis depends on S12, which acts as the O-(5'-phospho-DNA)-serine intermediate. Positions 17 to 38 (NPERQLEQTQVSKVFTDKASGK) are disordered. The segment at residues 164–183 (KAQLAREFNISRETLYQYLR) is a DNA-binding region (H-T-H motif).

This sequence belongs to the site-specific recombinase resolvase family.

Its function is as follows. Resolvase catalyzes the resolution (a site-specific recombination) of the cointegrated replicon to yield the final transposition products. The protein is Transposon Tn501 resolvase (tnpR) of Pseudomonas aeruginosa.